A 359-amino-acid chain; its full sequence is Peptide chain release factor 1 (359 aa).

Q236 is modified (N5-methylglutamine).

The protein belongs to the prokaryotic/mitochondrial release factor family. Post-translationally, methylated by PrmC. Methylation increases the termination efficiency of RF1.

The protein localises to the cytoplasm. Functionally, peptide chain release factor 1 directs the termination of translation in response to the peptide chain termination codons UAG and UAA. In Mycoplasma pneumoniae (strain ATCC 29342 / M129 / Subtype 1) (Mycoplasmoides pneumoniae), this protein is Peptide chain release factor 1 (prfA).